A 433-amino-acid polypeptide reads, in one-letter code: MTDFSPREIVSELDRFIVGQADAKRAVAIALRNRWRRLQLEGALREEVLPKNILMIGPTGVGKTEIARRLAKLANAPFLKVEATKFTEVGYVGRDVEQIIRDLVEVAIAQVREKKRKDVQARAQIAAEERVLDALVGPGSSPATRDSFRRKLRTGELNDKEIEIETQAGGGSPMFEIPGMPGGQIGAISIGDIFGKMGGRTKTRRLTVVDSHDILVNEEADKLLDNDQLVQEAINAVENNGIVFLDEIDKICVRDGRSGGEVSREGVQRDLLPLIEGTTVATKHGAVKTDHILFIASGAFHIAKPSDLLPELQGRLPIRVELNALSRDDMRRILTEPEASLIKQYVALLQTEGVTLEFGDDAIDALADVAVAVNSTVENIGARRLQTVMERVLDDISFGAPDRGGETIRIDADYVQKNVGDLAKNTDLSRFIL.

ATP contacts are provided by residues Val18, 60-65 (GVGKTE), Asp246, Glu311, and Arg383.

Belongs to the ClpX chaperone family. HslU subfamily. As to quaternary structure, a double ring-shaped homohexamer of HslV is capped on each side by a ring-shaped HslU homohexamer. The assembly of the HslU/HslV complex is dependent on binding of ATP.

The protein resides in the cytoplasm. ATPase subunit of a proteasome-like degradation complex; this subunit has chaperone activity. The binding of ATP and its subsequent hydrolysis by HslU are essential for unfolding of protein substrates subsequently hydrolyzed by HslV. HslU recognizes the N-terminal part of its protein substrates and unfolds these before they are guided to HslV for hydrolysis. This chain is ATP-dependent protease ATPase subunit HslU, found in Rhodopseudomonas palustris (strain HaA2).